The following is a 250-amino-acid chain: MSAAHKNLLAVWAKEPKDLVAVEKALNELTKVLSASSDLNDKQSALASKDLYEISVLLAILKHDFETFDDYINQMHTYYTMAPENSENKHLMTGLHLMFLLAANRLSDFHMLLEQIPQKEQTSNAYISTPVRIEQSLMEGAYNKVVLTEKNIPSPFYTIFIRIMLDTIRREIATSIEKSFKVLTAKDATVMLLFDNDEQMKKFGQERKWHLDGERYVFEIEVAQEKPVNLDTVRVATQTLFYAKQLEQIV.

The region spanning 63-233 (HDFETFDDYI…QEKPVNLDTV (171 aa)) is the PCI domain.

The protein belongs to the proteasome subunit S14 family.

Its function is as follows. Acts as a regulatory subunit of the 26S proteasome which is involved in the ATP-dependent degradation of ubiquitinated proteins. This chain is 26S proteasome non-ATPase regulatory subunit 8, found in Caenorhabditis elegans.